We begin with the raw amino-acid sequence, 205 residues long: Cytochrome c biogenesis ATP-binding export protein CcmA 2 (205 aa).

Positions 2-205 (LEARDLYCER…LALTGGGAGL (204 aa)) constitute an ABC transporter domain. Position 34-41 (34-41 (GGNGAGKT)) interacts with ATP.

This sequence belongs to the ABC transporter superfamily. CcmA exporter (TC 3.A.1.107) family. In terms of assembly, the complex is composed of two ATP-binding proteins (CcmA) and two transmembrane proteins (CcmB).

The protein localises to the cell inner membrane. It catalyses the reaction heme b(in) + ATP + H2O = heme b(out) + ADP + phosphate + H(+). Its function is as follows. Part of the ABC transporter complex CcmAB involved in the biogenesis of c-type cytochromes; once thought to export heme, this seems not to be the case, but its exact role is uncertain. Responsible for energy coupling to the transport system. This chain is Cytochrome c biogenesis ATP-binding export protein CcmA 2, found in Salmonella typhimurium (strain LT2 / SGSC1412 / ATCC 700720).